Consider the following 218-residue polypeptide: Ribosomal RNA small subunit methyltransferase G (218 aa).

Residues Gly-82, Leu-87, 133–134 (VE), and Arg-147 contribute to the S-adenosyl-L-methionine site.

It belongs to the methyltransferase superfamily. RNA methyltransferase RsmG family.

It localises to the cytoplasm. It carries out the reaction guanosine(527) in 16S rRNA + S-adenosyl-L-methionine = N(7)-methylguanosine(527) in 16S rRNA + S-adenosyl-L-homocysteine. Functionally, specifically methylates the N7 position of guanine in position 527 of 16S rRNA. This Leptothrix cholodnii (strain ATCC 51168 / LMG 8142 / SP-6) (Leptothrix discophora (strain SP-6)) protein is Ribosomal RNA small subunit methyltransferase G.